The sequence spans 490 residues: AP-5 complex subunit mu-1 (490 aa).

Residues 206–476 (KPQVSISITE…LISSDYYIWN (271 aa)) form the MHD domain.

This sequence belongs to the adaptor complexes medium subunit family. As to quaternary structure, probably part of the adaptor protein complex 5 (AP-5) a tetramer composed of AP5B1, AP5M1, AP5S1 and AP5Z1.

Its subcellular location is the cytoplasm. The protein resides in the cytosol. It localises to the late endosome membrane. The protein localises to the lysosome membrane. As part of AP-5, a probable fifth adaptor protein complex it may be involved in endosomal transport. In Macaca fascicularis (Crab-eating macaque), this protein is AP-5 complex subunit mu-1 (AP5M1).